A 208-amino-acid polypeptide reads, in one-letter code: Ribosomal RNA large subunit methyltransferase E (208 aa).

Residues Gly62, Trp64, Asp82, Asp98, and Asp123 each coordinate S-adenosyl-L-methionine. The active-site Proton acceptor is Lys163.

This sequence belongs to the class I-like SAM-binding methyltransferase superfamily. RNA methyltransferase RlmE family.

It localises to the cytoplasm. It carries out the reaction uridine(2552) in 23S rRNA + S-adenosyl-L-methionine = 2'-O-methyluridine(2552) in 23S rRNA + S-adenosyl-L-homocysteine + H(+). Its function is as follows. Specifically methylates the uridine in position 2552 of 23S rRNA at the 2'-O position of the ribose in the fully assembled 50S ribosomal subunit. In Haemophilus ducreyi (strain 35000HP / ATCC 700724), this protein is Ribosomal RNA large subunit methyltransferase E.